The primary structure comprises 301 residues: MHIAIMSRNKNLYSTSRLKEAAEARGHVIKIVDPLKCYMNINMNAPSIHVRGEELPKFDAVIPRIGASVTFYGTAVLRQFEMMGTHPLNESVAITRSRDKLRSLQLLSRKNIGLPVTGFASKPADIPDLLDMVGGAPCVIKLLEGTQGIGVVLAETRKAAESVIEAFMGLKANIMVQEYIAEAGGADIRCFVIGDKVIAAMKRQALPGEFRSNLHRGGSASIVKLTPEERSTALRAAKTMGLNVAGVDILRSKHGPLVMEVNSSPGLEGIEKATGIDVAEKIIQFIEKNVKSTSSKTKGVG.

Positions 104–287 (LQLLSRKNIG…VAEKIIQFIE (184 aa)) constitute an ATP-grasp domain. Residues Lys141, 178 to 179 (EY), Asp187, and 211 to 213 (RSN) each bind ATP. Positions 248, 260, and 262 each coordinate Mg(2+). 3 residues coordinate Mn(2+): Asp248, Glu260, and Asn262.

It belongs to the RimK family. Requires Mg(2+) as cofactor. Mn(2+) is required as a cofactor.

This is Probable alpha-L-glutamate ligase 1 from Shewanella frigidimarina (strain NCIMB 400).